The primary structure comprises 586 residues: Phosphomethylpyrimidine synthase (586 aa).

A disordered region spans residues 1–33; sequence MKQSVSAEQIELKSSLPGSKKVYVDGPREGMKV. Over residues 22–33 the composition is skewed to basic and acidic residues; it reads VYVDGPREGMKV. Residues N193, M222, Y251, H287, 307–309, 348–351, and E387 contribute to the substrate site; these read SRG and DGLR. Zn(2+) is bound at residue H391. Y414 provides a ligand contact to substrate. H455 is a binding site for Zn(2+). Residues C535, C538, and C543 each contribute to the [4Fe-4S] cluster site.

This sequence belongs to the ThiC family. The cofactor is [4Fe-4S] cluster.

The enzyme catalyses 5-amino-1-(5-phospho-beta-D-ribosyl)imidazole + S-adenosyl-L-methionine = 4-amino-2-methyl-5-(phosphooxymethyl)pyrimidine + CO + 5'-deoxyadenosine + formate + L-methionine + 3 H(+). It functions in the pathway cofactor biosynthesis; thiamine diphosphate biosynthesis. In terms of biological role, catalyzes the synthesis of the hydroxymethylpyrimidine phosphate (HMP-P) moiety of thiamine from aminoimidazole ribotide (AIR) in a radical S-adenosyl-L-methionine (SAM)-dependent reaction. This Bacillus cereus (strain G9842) protein is Phosphomethylpyrimidine synthase.